Here is a 122-residue protein sequence, read N- to C-terminus: Large ribosomal subunit protein uL14 (122 aa).

It belongs to the universal ribosomal protein uL14 family. Part of the 50S ribosomal subunit. Forms a cluster with proteins L3 and L19. In the 70S ribosome, L14 and L19 interact and together make contacts with the 16S rRNA in bridges B5 and B8.

In terms of biological role, binds to 23S rRNA. Forms part of two intersubunit bridges in the 70S ribosome. The sequence is that of Large ribosomal subunit protein uL14 from Levilactobacillus brevis (strain ATCC 367 / BCRC 12310 / CIP 105137 / JCM 1170 / LMG 11437 / NCIMB 947 / NCTC 947) (Lactobacillus brevis).